The chain runs to 236 residues: Small ribosomal subunit protein uS2c (236 aa).

The protein belongs to the universal ribosomal protein uS2 family.

The protein localises to the plastid. The protein resides in the chloroplast. This is Small ribosomal subunit protein uS2c (rps2) from Saccharum hybrid (Sugarcane).